The sequence spans 1000 residues: Exportin-T (1000 aa).

It belongs to the exportin family.

The protein localises to the nucleus. Its subcellular location is the cytoplasm. In terms of biological role, tRNA nucleus export receptor which facilitates tRNA translocation across the nuclear pore complex. Involved in pre-tRNA splicing, probably by affecting the interaction of pre-tRNA with splicing endonuclease. This Debaryomyces hansenii (strain ATCC 36239 / CBS 767 / BCRC 21394 / JCM 1990 / NBRC 0083 / IGC 2968) (Yeast) protein is Exportin-T (LOS1).